Here is a 136-residue protein sequence, read N- to C-terminus: uncharacterized protein (136 aa).

This is an uncharacterized protein from Mycoplasma pneumoniae (strain ATCC 29342 / M129 / Subtype 1) (Mycoplasmoides pneumoniae).